Reading from the N-terminus, the 131-residue chain is Type IV wide pilus major component PilA4 (131 aa).

Residues 1–6 (MRNAKG) constitute a propeptide, leader sequence. Residue Phe7 is modified to N-methylphenylalanine. A helical membrane pass occupies residues 7-27 (FTLIELLIVIAIIAILAAVLI). Cys95 and Cys130 form a disulfide bridge.

As to quaternary structure, interacts with PilQ. Post-translationally, found in three forms of 14-kDa, 18-kDa and a glycosylated 23-kDa form. Both narrow and wide pili are glycosylated.

It localises to the cell inner membrane. The protein localises to the cell outer membrane. It is found in the periplasm. Functionally, plays an essential role in the assembly of two types of T4P pili: a wide and a narrow that participate in natural transformation and twitching motility. Major component of the wide pilus that is essential for natural transformation working as a DNA translocator structure that spans the inner and outer membranes. In addition, participates in the assembly of the narrow pilus composed of the PilA5 subunit that is required for twitching motility. The protein is Type IV wide pilus major component PilA4 (pilA4) of Thermus thermophilus (strain ATCC BAA-163 / DSM 7039 / HB27).